We begin with the raw amino-acid sequence, 273 residues long: Formamidopyrimidine-DNA glycosylase (273 aa).

The active-site Schiff-base intermediate with DNA is Pro2. Catalysis depends on Glu3, which acts as the Proton donor. Catalysis depends on Lys59, which acts as the Proton donor; for beta-elimination activity. Positions 92 and 111 each coordinate DNA. Residues 239 to 273 (KVYGKTDEPCVVCGKPIEKIKLNGRGTHFCPNCQK) form an FPG-type zinc finger. Residue Arg263 is the Proton donor; for delta-elimination activity of the active site.

It belongs to the FPG family. Monomer. The cofactor is Zn(2+).

It catalyses the reaction Hydrolysis of DNA containing ring-opened 7-methylguanine residues, releasing 2,6-diamino-4-hydroxy-5-(N-methyl)formamidopyrimidine.. It carries out the reaction 2'-deoxyribonucleotide-(2'-deoxyribose 5'-phosphate)-2'-deoxyribonucleotide-DNA = a 3'-end 2'-deoxyribonucleotide-(2,3-dehydro-2,3-deoxyribose 5'-phosphate)-DNA + a 5'-end 5'-phospho-2'-deoxyribonucleoside-DNA + H(+). Functionally, involved in base excision repair of DNA damaged by oxidation or by mutagenic agents. Acts as a DNA glycosylase that recognizes and removes damaged bases. Has a preference for oxidized purines, such as 7,8-dihydro-8-oxoguanine (8-oxoG). Has AP (apurinic/apyrimidinic) lyase activity and introduces nicks in the DNA strand. Cleaves the DNA backbone by beta-delta elimination to generate a single-strand break at the site of the removed base with both 3'- and 5'-phosphates. The protein is Formamidopyrimidine-DNA glycosylase of Listeria monocytogenes serotype 4b (strain F2365).